Here is a 198-residue protein sequence, read N- to C-terminus: Nucleoid occlusion factor SlmA (198 aa).

The region spanning 9–70 is the HTH tetR-type domain; the sequence is RNRREEILQS…SLIEFIEDSL (62 aa). Residues 33–52 constitute a DNA-binding region (H-T-H motif); it reads TTAKLAASVGVSEAALYRHF. A coiled-coil region spans residues 117–145; that stretch reads EQDRLQGRINQLFERIEAQLRQVLREKKM.

This sequence belongs to the nucleoid occlusion factor SlmA family. In terms of assembly, homodimer. Interacts with FtsZ.

It is found in the cytoplasm. Its subcellular location is the nucleoid. Required for nucleoid occlusion (NO) phenomenon, which prevents Z-ring formation and cell division over the nucleoid. Acts as a DNA-associated cell division inhibitor that binds simultaneously chromosomal DNA and FtsZ, and disrupts the assembly of FtsZ polymers. SlmA-DNA-binding sequences (SBS) are dispersed on non-Ter regions of the chromosome, preventing FtsZ polymerization at these regions. This is Nucleoid occlusion factor SlmA from Cronobacter sakazakii (strain ATCC BAA-894) (Enterobacter sakazakii).